The sequence spans 35 residues: Conotoxin Cl6.16 (35 aa).

3 disulfides stabilise this stretch: cysteine 10–cysteine 22, cysteine 16–cysteine 27, and cysteine 21–cysteine 34.

Expressed by the venom duct.

It is found in the secreted. The protein is Conotoxin Cl6.16 of Californiconus californicus (California cone).